We begin with the raw amino-acid sequence, 310 residues long: uncharacterized protein (310 aa).

A compositionally biased stretch (basic residues) spans 1 to 11; it reads MKVKSILKHSR. 2 disordered regions span residues 1–227 and 242–310; these read MKVK…SDHA and AMEE…NENE. Residues 12–50 show a composition bias toward polar residues; sequence MSSPSLETDSMESGQQQNMVSSTPSIDMNESDCSGTGTP. The segment covering 51 to 80 has biased composition (basic and acidic residues); it reads SEERIRRLRWDEENLSKAEQQKSAKMKITE. The span at 91–105 shows a compositional bias: acidic residues; sequence PDDEVPEINLDETDS. Residues 110 to 121 are compositionally biased toward low complexity; it reads TAGTLGDTLGTL. Basic and acidic residues-rich tracts occupy residues 126-150 and 182-195; these read VSKDSKDDNVSFSSDKKQFYVKKEP and LPSKKELFPRETKP. The span at 242–253 shows a compositional bias: acidic residues; that stretch reads AMEEEALSEAEE. Basic and acidic residues predominate over residues 254-265; the sequence is NIPKKKPDFNEL. At S285 the chain carries Phosphoserine. Polar residues predominate over residues 297–310; it reads DSGSASDVNMNENE.

This is an uncharacterized protein from Schizosaccharomyces pombe (strain 972 / ATCC 24843) (Fission yeast).